A 227-amino-acid chain; its full sequence is 7-cyano-7-deazaguanine synthase (227 aa).

Phe-16–Leu-26 contributes to the ATP binding site. Cys-194, Cys-202, Cys-205, and Cys-208 together coordinate Zn(2+).

This sequence belongs to the QueC family. It depends on Zn(2+) as a cofactor.

It catalyses the reaction 7-carboxy-7-deazaguanine + NH4(+) + ATP = 7-cyano-7-deazaguanine + ADP + phosphate + H2O + H(+). It functions in the pathway purine metabolism; 7-cyano-7-deazaguanine biosynthesis. Its function is as follows. Catalyzes the ATP-dependent conversion of 7-carboxy-7-deazaguanine (CDG) to 7-cyano-7-deazaguanine (preQ(0)). The sequence is that of 7-cyano-7-deazaguanine synthase from Haemophilus influenzae (strain PittEE).